The primary structure comprises 244 residues: Ribosomal RNA large subunit methyltransferase E (244 aa).

The disordered stretch occupies residues 1-23 (MATGGKKSAGRTTGSGPAGGSRN). S-adenosyl-L-methionine is bound by residues glycine 91, tryptophan 93, aspartate 116, aspartate 132, and aspartate 156. The active-site Proton acceptor is the lysine 196.

It belongs to the class I-like SAM-binding methyltransferase superfamily. RNA methyltransferase RlmE family.

The protein localises to the cytoplasm. The catalysed reaction is uridine(2552) in 23S rRNA + S-adenosyl-L-methionine = 2'-O-methyluridine(2552) in 23S rRNA + S-adenosyl-L-homocysteine + H(+). Its function is as follows. Specifically methylates the uridine in position 2552 of 23S rRNA at the 2'-O position of the ribose in the fully assembled 50S ribosomal subunit. The polypeptide is Ribosomal RNA large subunit methyltransferase E (Paramagnetospirillum magneticum (strain ATCC 700264 / AMB-1) (Magnetospirillum magneticum)).